We begin with the raw amino-acid sequence, 585 residues long: Arginine--tRNA ligase (585 aa).

A 'HIGH' region motif is present at residues 131-141 (ANPTGPMHVGH).

This sequence belongs to the class-I aminoacyl-tRNA synthetase family. As to quaternary structure, monomer.

The protein localises to the cytoplasm. It catalyses the reaction tRNA(Arg) + L-arginine + ATP = L-arginyl-tRNA(Arg) + AMP + diphosphate. This Rhizobium etli (strain ATCC 51251 / DSM 11541 / JCM 21823 / NBRC 15573 / CFN 42) protein is Arginine--tRNA ligase.